A 456-amino-acid chain; its full sequence is MKKLTCFKAYDIRGKLGEELNEDIAWRIGRAYGEFLKPKTIVLGGDVRLTSETLKLALAKGLQDAGVDVLDIGMSGTEEIYFATFHLGVDGGIEVTASHNPMDYNGMKLVREGARPISGDTGLRDVQRLAEANDFPPVDETKRGRYQQINLRDAYVDHLFGYINVKNLTPLKLVINSGNGAAGPVVDAIEARFKALGAPVELIKVHNTPDGNFPNGIPNPLLPECRDDTRNAVIKHGADMGIAFDGDFDRCFLFDEKGQFIEGYYIVGLLAEAFLEKNPGAKIIHDPRLSWNTVDVVTAAGGTPVMSKTGHAFIKERMRKEDAIYGGEMSAHHYFRDFAYCDSGMIPWLLVAELVCLKDKTLGELVRDRMAAFPASGEINSKLAQPVEAINRVEQHFSREALAVDRTDGISMTFADWRFNLRTSNTEPVVRLNVESRGDVPLMEARTRTLLTLLNE.

Catalysis depends on Ser-98, which acts as the Phosphoserine intermediate. Positions 98, 245, 247, and 249 each coordinate Mg(2+).

Belongs to the phosphohexose mutase family. The cofactor is Mg(2+).

The catalysed reaction is alpha-D-mannose 1-phosphate = D-mannose 6-phosphate. It functions in the pathway nucleotide-sugar biosynthesis; GDP-alpha-D-mannose biosynthesis; alpha-D-mannose 1-phosphate from D-fructose 6-phosphate: step 2/2. Involved in the biosynthesis of the capsular polysaccharide colanic acid. The chain is Phosphomannomutase (manB) from Escherichia coli (strain K12).